Consider the following 826-residue polypeptide: Zinc phosphodiesterase ELAC protein 2 (826 aa).

A mitochondrion-targeting transit peptide spans Met1–Met16. Polar residues predominate over residues Thr15 to Gln24. Disordered regions lie at residues Thr15–Cys51 and Gln189–Arg231. Positions Ala27 to Arg38 are enriched in basic and acidic residues. 6 positions are modified to phosphoserine: Ser199, Ser208, Ser212, Ser229, Ser618, and Ser736. The span at Ser208–Leu224 shows a compositional bias: basic and acidic residues. Positions Glu798 to Gln826 are disordered. The span at Pro808–Ala820 shows a compositional bias: basic and acidic residues.

This sequence belongs to the RNase Z family. As to quaternary structure, homodimer. Interacts with PTCD1. Zn(2+) is required as a cofactor.

It localises to the mitochondrion. The protein localises to the mitochondrion matrix. Its subcellular location is the mitochondrion nucleoid. The protein resides in the nucleus. It catalyses the reaction Endonucleolytic cleavage of RNA, removing extra 3' nucleotides from tRNA precursor, generating 3' termini of tRNAs. A 3'-hydroxy group is left at the tRNA terminus and a 5'-phosphoryl group is left at the trailer molecule.. Zinc phosphodiesterase, which displays mitochondrial tRNA 3'-processing endonuclease activity. Involved in tRNA maturation, by removing a 3'-trailer from precursor tRNA. Associates with mitochondrial DNA complexes at the nucleoids to initiate RNA processing and ribosome assembly. This is Zinc phosphodiesterase ELAC protein 2 (ELAC2) from Gorilla gorilla gorilla (Western lowland gorilla).